The following is a 360-amino-acid chain: Ribosomal RNA large subunit methyltransferase M (360 aa).

Residues S187, 220–223 (CPGG), D239, D259, and D276 each bind S-adenosyl-L-methionine. The Proton acceptor role is filled by K305.

This sequence belongs to the class I-like SAM-binding methyltransferase superfamily. RNA methyltransferase RlmE family. RlmM subfamily. In terms of assembly, monomer.

The protein localises to the cytoplasm. The catalysed reaction is cytidine(2498) in 23S rRNA + S-adenosyl-L-methionine = 2'-O-methylcytidine(2498) in 23S rRNA + S-adenosyl-L-homocysteine + H(+). Catalyzes the 2'-O-methylation at nucleotide C2498 in 23S rRNA. The protein is Ribosomal RNA large subunit methyltransferase M of Shewanella sediminis (strain HAW-EB3).